A 954-amino-acid chain; its full sequence is Glycine dehydrogenase (decarboxylating) (954 aa).

Lys-706 is modified (N6-(pyridoxal phosphate)lysine).

This sequence belongs to the GcvP family. As to quaternary structure, the glycine cleavage system is composed of four proteins: P, T, L and H. It depends on pyridoxal 5'-phosphate as a cofactor.

The catalysed reaction is N(6)-[(R)-lipoyl]-L-lysyl-[glycine-cleavage complex H protein] + glycine + H(+) = N(6)-[(R)-S(8)-aminomethyldihydrolipoyl]-L-lysyl-[glycine-cleavage complex H protein] + CO2. Functionally, the glycine cleavage system catalyzes the degradation of glycine. The P protein binds the alpha-amino group of glycine through its pyridoxal phosphate cofactor; CO(2) is released and the remaining methylamine moiety is then transferred to the lipoamide cofactor of the H protein. The sequence is that of Glycine dehydrogenase (decarboxylating) from Pseudomonas syringae pv. syringae (strain B728a).